The primary structure comprises 120 residues: Large ribosomal subunit protein bL19 (120 aa).

The protein belongs to the bacterial ribosomal protein bL19 family.

Its function is as follows. This protein is located at the 30S-50S ribosomal subunit interface and may play a role in the structure and function of the aminoacyl-tRNA binding site. The chain is Large ribosomal subunit protein bL19 from Chlorobium phaeobacteroides (strain DSM 266 / SMG 266 / 2430).